Consider the following 255-residue polypeptide: Small ribosomal subunit protein uS2 (255 aa).

Belongs to the universal ribosomal protein uS2 family.

The chain is Small ribosomal subunit protein uS2 from Streptococcus thermophilus (strain ATCC BAA-491 / LMD-9).